Reading from the N-terminus, the 36-residue chain is Collagen alpha-2(I) chain (36 aa).

A disordered region spans residues 1 to 36; that stretch reads GSNGEPGSAGPPGPAGLRGLPGESGAVGPAGPPGSR. Residues Pro6 and Pro12 each carry the 4-hydroxyproline modification. The segment covering 15-29 has biased composition (low complexity); sequence AGLRGLPGESGAVGP. Pro33 bears the 4-hydroxyproline mark.

This sequence belongs to the fibrillar collagen family. In terms of assembly, trimers of one alpha 2(I) and two alpha 1(I) chains. In terms of processing, proline residues at the third position of the tripeptide repeating unit (G-X-Y) are hydroxylated in some or all of the chains.

Its subcellular location is the secreted. It localises to the extracellular space. The protein resides in the extracellular matrix. Its function is as follows. Type I collagen is a member of group I collagen (fibrillar forming collagen). This Brachylophosaurus canadensis (Campanian hadrosaur) protein is Collagen alpha-2(I) chain.